We begin with the raw amino-acid sequence, 738 residues long: Ethylene receptor (738 aa).

3 helical membrane passes run 22-42, 53-73, and 91-111; these read ISDF…VYFV, VLVQ…INLW, and VLTA…IPDL. Residues C64 and H68 each contribute to the Cu cation site. The region spanning 157 to 305 is the GAF domain; sequence DRHTILKTTL…VVADQVAVAL (149 aa). In terms of domain architecture, Histidine kinase spans 348–585; sequence VMNHEMRTPM…TAIFIVKLGI (238 aa). Phosphohistidine; by autocatalysis is present on H351. In terms of domain architecture, Response regulatory spans 613–730; it reads KVLIMDDNGF…KMRSVLSELL (118 aa). D661 is modified (4-aspartylphosphate).

It belongs to the ethylene receptor family. In terms of assembly, homodimer; disulfide-linked. It depends on Cu cation as a cofactor. Post-translationally, activation probably requires a transfer of a phosphate group between a His in the transmitter domain and an Asp of the receiver domain.

The protein localises to the endoplasmic reticulum membrane. It catalyses the reaction ATP + protein L-histidine = ADP + protein N-phospho-L-histidine.. Its function is as follows. May act early in the ethylene signal transduction pathway, possibly as an ethylene receptor, or as a regulator of the pathway. The polypeptide is Ethylene receptor (ETR1) (Nicotiana tabacum (Common tobacco)).